The chain runs to 302 residues: Quinolinate synthase (302 aa).

Histidine 25 and serine 42 together coordinate iminosuccinate. Cysteine 87 serves as a coordination point for [4Fe-4S] cluster. Residues 113–115 (YVN) and serine 130 each bind iminosuccinate. Cysteine 172 contacts [4Fe-4S] cluster. Iminosuccinate is bound by residues 198-200 (HPE) and threonine 215. Cysteine 260 lines the [4Fe-4S] cluster pocket.

Belongs to the quinolinate synthase family. Type 2 subfamily. Requires [4Fe-4S] cluster as cofactor.

It localises to the cytoplasm. The enzyme catalyses iminosuccinate + dihydroxyacetone phosphate = quinolinate + phosphate + 2 H2O + H(+). It functions in the pathway cofactor biosynthesis; NAD(+) biosynthesis; quinolinate from iminoaspartate: step 1/1. Catalyzes the condensation of iminoaspartate with dihydroxyacetone phosphate to form quinolinate. The chain is Quinolinate synthase from Methanoregula boonei (strain DSM 21154 / JCM 14090 / 6A8).